Consider the following 63-residue polypeptide: uncharacterized protein (63 aa).

This is an uncharacterized protein from Thermoproteus tenax (TTV1).